Here is a 347-residue protein sequence, read N- to C-terminus: Protein RecA (347 aa).

67–74 is a binding site for ATP; the sequence is GPESSGKT. The segment at 327-347 is disordered; the sequence is ALGLSSPTPKENGKEKGKAKP. The segment covering 337-347 has biased composition (basic and acidic residues); it reads ENGKEKGKAKP.

This sequence belongs to the RecA family.

The protein localises to the cytoplasm. Functionally, can catalyze the hydrolysis of ATP in the presence of single-stranded DNA, the ATP-dependent uptake of single-stranded DNA by duplex DNA, and the ATP-dependent hybridization of homologous single-stranded DNAs. It interacts with LexA causing its activation and leading to its autocatalytic cleavage. The protein is Protein RecA of Desulforapulum autotrophicum (strain ATCC 43914 / DSM 3382 / VKM B-1955 / HRM2) (Desulfobacterium autotrophicum).